The primary structure comprises 146 residues: Large ribosomal subunit protein uL15 (146 aa).

The disordered stretch occupies residues M1–M54.

The protein belongs to the universal ribosomal protein uL15 family. In terms of assembly, part of the 50S ribosomal subunit.

Binds to the 23S rRNA. The sequence is that of Large ribosomal subunit protein uL15 from Mycobacterium ulcerans (strain Agy99).